The primary structure comprises 262 residues: Small ribosomal subunit protein uS2 (262 aa).

This sequence belongs to the universal ribosomal protein uS2 family.

This Rhodospirillum rubrum (strain ATCC 11170 / ATH 1.1.1 / DSM 467 / LMG 4362 / NCIMB 8255 / S1) protein is Small ribosomal subunit protein uS2.